The following is an 86-amino-acid chain: Neurotoxin E1x (86 aa).

Positions 1 to 19 are cleaved as a signal peptide; the sequence is MNSLLMITACLVVIGTVWA. Residues 20 to 84 enclose the LCN-type CS-alpha/beta domain; that stretch reads KEGYLVDVKG…TWPLPNKTCG (65 aa). 4 disulfides stabilise this stretch: Cys-30-Cys-83, Cys-34-Cys-59, Cys-43-Cys-64, and Cys-47-Cys-66. Residue Cys-83 is modified to Cysteine amide.

This sequence belongs to the long (4 C-C) scorpion toxin superfamily. Sodium channel inhibitor family. Beta subfamily. As to expression, expressed by the venom gland.

It is found in the secreted. In terms of biological role, binds to sodium channels (Nav) and inhibits the inactivation of the activated channels, thereby blocking neuronal transmission. The sequence is that of Neurotoxin E1x from Centruroides sculpturatus (Arizona bark scorpion).